Consider the following 168-residue polypeptide: Scytalone dehydratase arp1 (168 aa).

Tyrosine 29 and tyrosine 49 together coordinate substrate. Active-site residues include histidine 84 and histidine 109. Position 130 (asparagine 130) interacts with substrate.

It belongs to the scytalone dehydratase family. Homotrimer. Each subunit contains an active site, located in the central part of the hydrophobic core of the monomer, which functions independently.

Its subcellular location is the endosome. The catalysed reaction is scytalone = 1,3,8-trihydroxynaphthalene + H2O. It functions in the pathway pigment biosynthesis; melanin biosynthesis. Fenoxanil inhibits arp1 scytalone dehydratase activity. Scytalone dehydratase; part of the gene cluster that mediates the biosynthesis of dihydroxynaphthalene (DHN)-melanin, a bluish-green pigment and a structural component of the conidial wall. The first step of the pathway is the production of the heptaketide naphtopyrone YWA1 by the polyketide synthase alb1 though condensation of acetyl-CoA with malonyl-CoA. The naphtopyrone YWA1 is then converted to the pentaketide 1,3,6,8-tetrahydroxynaphthalene (1,3,6,8-THN) by the heptaketide hydrolyase ayg1 though chain-length shortening. 1,3,6,8-THN is substrate of the hydroxynaphthalene reductase arp2 to yield scytalone. The scytalone dehydratase arp1 then reduces scytalone to 1,3,8-THN. 1,3,8-THN is also substrate of the hydroxynaphthalene reductase arp2 to yield vermelone. Vermelone is further converted by the multicopper oxidase abr1 to 1,8-DHN. Finally the laccase abr2 transforms 1,8-DHN to DHN-melanin. DHN-melanin biosynthesis appears to be initiated in endosomes where early enzymes (abl1, ayg1, arp1 and arp2) localize, with exocytosis leading to melanin deposition on the cell surface where late enzymes (abr1 and abr2) localize. DHN-melanin is an important structural component of the outer cell wall and is required for the presence of conidial surface hydrophobins. DHN-melanin also plays a crucial role in fungal virulence, including a protective role against the host's immune defenses. DHN-melanin also protects conidia against amoeba predation. This is Scytalone dehydratase arp1 from Aspergillus fumigatus (strain ATCC MYA-4609 / CBS 101355 / FGSC A1100 / Af293) (Neosartorya fumigata).